The chain runs to 459 residues: Bifunctional protein GlmU (459 aa).

The interval 1–229 (MSNYAIILAA…FDESLGVNDR (229 aa)) is pyrophosphorylase. Residues 8 to 11 (LAAG), Lys-22, Gln-72, and 77 to 78 (GT) contribute to the UDP-N-acetyl-alpha-D-glucosamine site. Residue Asp-102 participates in Mg(2+) binding. Gly-139, Glu-154, Asn-169, and Asn-227 together coordinate UDP-N-acetyl-alpha-D-glucosamine. Mg(2+) is bound at residue Asn-227. The tract at residues 230–250 (VALATAEKVMRHRIARQHMVN) is linker. Residues 251–459 (GVTVVNPDSA…NKKPHHPSQK (209 aa)) are N-acetyltransferase. UDP-N-acetyl-alpha-D-glucosamine-binding residues include Arg-332 and Lys-350. His-362 serves as the catalytic Proton acceptor. 2 residues coordinate UDP-N-acetyl-alpha-D-glucosamine: Tyr-365 and Asn-376. Acetyl-CoA-binding positions include Ala-379, 385 to 386 (NY), Ser-404, Ala-422, and Arg-439.

In the N-terminal section; belongs to the N-acetylglucosamine-1-phosphate uridyltransferase family. The protein in the C-terminal section; belongs to the transferase hexapeptide repeat family. As to quaternary structure, homotrimer. Mg(2+) serves as cofactor.

Its subcellular location is the cytoplasm. It carries out the reaction alpha-D-glucosamine 1-phosphate + acetyl-CoA = N-acetyl-alpha-D-glucosamine 1-phosphate + CoA + H(+). The catalysed reaction is N-acetyl-alpha-D-glucosamine 1-phosphate + UTP + H(+) = UDP-N-acetyl-alpha-D-glucosamine + diphosphate. It functions in the pathway nucleotide-sugar biosynthesis; UDP-N-acetyl-alpha-D-glucosamine biosynthesis; N-acetyl-alpha-D-glucosamine 1-phosphate from alpha-D-glucosamine 6-phosphate (route II): step 2/2. The protein operates within nucleotide-sugar biosynthesis; UDP-N-acetyl-alpha-D-glucosamine biosynthesis; UDP-N-acetyl-alpha-D-glucosamine from N-acetyl-alpha-D-glucosamine 1-phosphate: step 1/1. It participates in bacterial outer membrane biogenesis; LPS lipid A biosynthesis. Catalyzes the last two sequential reactions in the de novo biosynthetic pathway for UDP-N-acetylglucosamine (UDP-GlcNAc). The C-terminal domain catalyzes the transfer of acetyl group from acetyl coenzyme A to glucosamine-1-phosphate (GlcN-1-P) to produce N-acetylglucosamine-1-phosphate (GlcNAc-1-P), which is converted into UDP-GlcNAc by the transfer of uridine 5-monophosphate (from uridine 5-triphosphate), a reaction catalyzed by the N-terminal domain. The polypeptide is Bifunctional protein GlmU (Streptococcus agalactiae serotype V (strain ATCC BAA-611 / 2603 V/R)).